The primary structure comprises 349 residues: Protein-glutamate methylesterase/protein-glutamine glutaminase (349 aa).

Residues 5 to 122 (RVLSVDDSAL…REGMLAYSEM (118 aa)) enclose the Response regulatory domain. Position 56 is a 4-aspartylphosphate (Asp56). In terms of domain architecture, CheB-type methylesterase spans 152–344 (LLSSEKLIAI…QQMLAKISAG (193 aa)). Active-site residues include Ser164, His190, and Asp286.

It belongs to the CheB family. Phosphorylated by CheA. Phosphorylation of the N-terminal regulatory domain activates the methylesterase activity.

The protein localises to the cytoplasm. It carries out the reaction [protein]-L-glutamate 5-O-methyl ester + H2O = L-glutamyl-[protein] + methanol + H(+). The enzyme catalyses L-glutaminyl-[protein] + H2O = L-glutamyl-[protein] + NH4(+). Functionally, involved in chemotaxis. Part of a chemotaxis signal transduction system that modulates chemotaxis in response to various stimuli. Catalyzes the demethylation of specific methylglutamate residues introduced into the chemoreceptors (methyl-accepting chemotaxis proteins or MCP) by CheR. Also mediates the irreversible deamidation of specific glutamine residues to glutamic acid. This is Protein-glutamate methylesterase/protein-glutamine glutaminase from Salmonella typhi.